A 274-amino-acid chain; its full sequence is Deoxyribonuclease TATDN3 (274 aa).

The Zn(2+) site is built by His-12, His-14, Glu-107, His-147, His-170, and Asp-218.

Belongs to the metallo-dependent hydrolases superfamily. TatD-type hydrolase family. Mn(2+) is required as a cofactor. It depends on Ca(2+) as a cofactor. Requires Mg(2+) as cofactor. Zn(2+) serves as cofactor.

The protein resides in the nucleus. With respect to regulation, the 3'-exonuclease activity is sensitive to the metal ion present in the active site, whereas the AP endodeoxyribonuclease activity is observed in a variety of divalent metal cofactors. 3'-exoxonuclease activity is suppressed in the presence of Ca(2+), Zn(2+) and Ni(2+). In terms of biological role, exhibits 3'-exonuclease activities and apurinic/apyrimidinic (AP) endonuclease (in vitro). Show preferential AP endonuclease activity on double-stranded DNA substrates and 3'- exonuclease activity on single-stranded DNA. The chain is Deoxyribonuclease TATDN3 (TATDN3) from Homo sapiens (Human).